A 356-amino-acid polypeptide reads, in one-letter code: GTPase Obg (356 aa).

The 159-residue stretch at 1 to 159 (MKFLDEAKVY…RWIWLRMKLI (159 aa)) folds into the Obg domain. One can recognise an OBG-type G domain in the interval 160–327 (ADAGLVGLPN…ALRKLADVIS (168 aa)). Residues 166–173 (GLPNAGKS), 191–195 (FTTLH), 212–215 (DIPG), 279–282 (NKID), and 308–310 (SGA) each bind GTP. Mg(2+)-binding residues include Ser173 and Thr193. Residues 332-356 (SIKAKSTSDSAATEEPWAAPLPPQG) are disordered.

It belongs to the TRAFAC class OBG-HflX-like GTPase superfamily. OBG GTPase family. In terms of assembly, monomer. The cofactor is Mg(2+).

It is found in the cytoplasm. An essential GTPase which binds GTP, GDP and possibly (p)ppGpp with moderate affinity, with high nucleotide exchange rates and a fairly low GTP hydrolysis rate. Plays a role in control of the cell cycle, stress response, ribosome biogenesis and in those bacteria that undergo differentiation, in morphogenesis control. This is GTPase Obg from Bradyrhizobium sp. (strain BTAi1 / ATCC BAA-1182).